The following is a 1141-amino-acid chain: Serine-aspartate repeat-containing protein E (1141 aa).

A signal peptide spans 1–52 (MINRDNKKAITKKGMISNRLNKFSIRKYTVGTASILVGTTLIFGLGNQEAKA). A YSIRK-G/S signaling motif motif is present at residues 23-34 (FSIRKYTVGTAS). The interval 53–601 (AENTSTENAK…GDGTVKPEEK (549 aa)) is ligand binding A region. The interval 54–248 (ENTSTENAKQ…RSTKPVATAP (195 aa)) is disordered. Residues 61–75 (AKQDDATTSDNKEVV) are compositionally biased toward basic and acidic residues. Over residues 77-90 (ETENNSTTENDSTN) the composition is skewed to low complexity. Basic and acidic residues predominate over residues 92–108 (IKKETNTDSQPEAKEES). The span at 109–126 (TTSSTQQQQNNVTATTET) shows a compositional bias: low complexity. Over residues 130-145 (NIEKENVKPSTDKTAT) the composition is skewed to basic and acidic residues. The span at 159–207 (NYTNNDVTTKPSTSEIQTKPTTPQESTNIENSQPQPTPSKVDNQVTDAT) shows a compositional bias: polar residues. A compositionally biased stretch (basic and acidic residues) spans 216 to 241 (SKEELKNNPEKLKELVRNDNNTDRST). 3 CNA-B domains span residues 602–714 (LYKI…YKEP), 715–824 (KYNL…YKTP), and 825–935 (KYSL…EEDT). Residues 899–1117 (VTNTTEDDKD…GSENNGSNNA (219 aa)) form a disordered region. Composition is skewed to acidic residues over residues 903-913 (TEDDKDADGGE) and 930-1080 (YFEE…DSDS). The short motif at 1104-1108 (LPETG) is the LPXTG sorting signal element. Threonine 1107 is modified (pentaglycyl murein peptidoglycan amidated threonine). A propeptide spans 1108 to 1141 (GSENNGSNNATLFGGLFAALGSLLLFGRRKKQNK) (removed by sortase).

This sequence belongs to the serine-aspartate repeat-containing protein (SDr) family. In terms of assembly, interacts with host complement factor H/CFAH (via C-terminus). Interacts with host complement regulator C4BPA.

It localises to the secreted. It is found in the cell wall. Its function is as follows. Cell surface-associated calcium-binding protein which plays an important role in adhesion and pathogenesis. Contributes to the resistance to killing by innate immune components in blood and thus attenuates bacterial clearance by interacting with host complement factor H/CFAH and modulating its activity. Also inhibits bacterial opsonization and killing by interacting with host complement regulator C4BPA and thus inhibiting classical complement pathway activation. The sequence is that of Serine-aspartate repeat-containing protein E (sdrE) from Staphylococcus aureus (strain N315).